The following is a 270-amino-acid chain: 3-methyl-2-oxobutanoate hydroxymethyltransferase (270 aa).

Mg(2+) contacts are provided by D50 and D89. Residues 50 to 51, D89, and K118 each bind 3-methyl-2-oxobutanoate; that span reads DS. Position 120 (E120) interacts with Mg(2+). E187 functions as the Proton acceptor in the catalytic mechanism.

The protein belongs to the PanB family. In terms of assembly, homodecamer; pentamer of dimers. The cofactor is Mg(2+).

The protein resides in the cytoplasm. It catalyses the reaction 3-methyl-2-oxobutanoate + (6R)-5,10-methylene-5,6,7,8-tetrahydrofolate + H2O = 2-dehydropantoate + (6S)-5,6,7,8-tetrahydrofolate. It functions in the pathway cofactor biosynthesis; (R)-pantothenate biosynthesis; (R)-pantoate from 3-methyl-2-oxobutanoate: step 1/2. Its function is as follows. Catalyzes the reversible reaction in which hydroxymethyl group from 5,10-methylenetetrahydrofolate is transferred onto alpha-ketoisovalerate to form ketopantoate. This is 3-methyl-2-oxobutanoate hydroxymethyltransferase from Helicobacter pylori (strain HPAG1).